We begin with the raw amino-acid sequence, 2059 residues long: Desmoplakin-A (2059 aa).

Residues 1 to 11 (MSLSGSQTRLH) show a composition bias toward polar residues. The segment at 1–25 (MSLSGSQTRLHQISRRSSSRPDLTA) is disordered. 2 coiled-coil regions span residues 320–354 (IPQK…LLKN) and 397–453 (FKEA…VQTL). The segment at 665–690 (EVSSGKTATGVSSGKTATGVSSGKTS) is disordered. Residues 671–690 (TATGVSSGKTATGVSSGKTS) are compositionally biased toward low complexity. Coiled-coil stretches lie at residues 1062-1229 (MEEL…AELE) and 1261-1383 (LQQD…LQQR). 6 Plectin repeats span residues 1450–1488 (YLGG…TLEL), 1489–1526 (LEAQ…KDKL), 1564–1602 (LLEA…NEIL), 1666–1694 (IVDP…FLEL), 1847–1885 (LLEA…SVKL), and 1923–1961 (FLEF…AQKL). Residues 2008-2059 (KGISSPYNVSSGPSSRSGSRAGSRTGSRSGSRRGSVDYSSSSVSYTFFSSAS) form a disordered region. The segment covering 2011–2059 (SSPYNVSSGPSSRSGSRAGSRTGSRSGSRRGSVDYSSSSVSYTFFSSAS) has biased composition (low complexity).

Belongs to the plakin or cytolinker family.

Its subcellular location is the cell junction. It localises to the desmosome. The protein resides in the cell membrane. Functionally, involved in the organization of desmosome cell-cell junctions. Of particular importance in cell adhesion in the skin and during cardiac development. May also play a role in the regulation of Wnt, TGF-beta and Hippo signaling pathways. The polypeptide is Desmoplakin-A (Danio rerio (Zebrafish)).